The primary structure comprises 203 residues: GTP-binding protein YPTM2 (203 aa).

Residues 15 to 23 (GDSGVGKSC), 33 to 40 (YLDSYIST), 63 to 67 (DTAGQ), 121 to 124 (NKSD), and 151 to 153 (SAK) contribute to the GTP site. Positions 37–45 (YISTIGVDF) match the Effector region motif. 2 S-geranylgeranyl cysteine lipidation sites follow: C200 and C201.

This sequence belongs to the small GTPase superfamily. Rab family. In terms of tissue distribution, its expression is weak in stems, higher in roots, leaves and coleoptiles, but highest in flowers.

The protein resides in the cell membrane. In terms of biological role, protein transport. Probably involved in vesicular traffic. This is GTP-binding protein YPTM2 (YPTM2) from Zea mays (Maize).